Here is a 617-residue protein sequence, read N- to C-terminus: Actin-binding protein (617 aa).

The ADF-H domain maps to 7–136 (DATTHSRDIE…DEEELLTKIS (130 aa)). Disordered stretches follow at residues 169–223 (PSLA…LSDN) and 325–574 (AEKK…GEDN). The 1-1 repeat unit spans residues 202 to 211 (ADDWDEPEIK). Positions 202 to 600 (ADDWDEPEIK…DDDWWLGELE (399 aa)) are 3 X 10 AA approximate repeats. 2 stretches are compositionally biased toward basic and acidic residues: residues 340–351 (EEQKPVETKTEI) and 359–375 (DEMKIGDLKSRFEKLGA). Positions 400-411 (TFGQPAANSKPA) are enriched in polar residues. Composition is skewed to acidic residues over residues 437–453 (EHEEEDNDDDWGEDEDE), 483–502 (EPVEEGEEEEEEEEEEEEEA), and 516–530 (PEPEQPQEEEEEEEA). A run of 4 repeats spans residues 444 to 453 (DDDWGEDEDE), 495 to 510 (EEEEEEEAPAPSLPSR), 523 to 538 (EEEEEEEAPAPSLPSR), and 591 to 600 (DDDWWLGELE). The 2 X 16 AA repeats of E(7)-A-P-A-P-S-L-P-S-R stretch occupies residues 495–538 (EEEEEEEAPAPSLPSRNAAPEPEPEQPQEEEEEEEAPAPSLPSR). The SH3 domain occupies 557 to 617 (AEAPWATAEY…FPSNYVVLGN (61 aa)).

It is found in the cytoplasm. Its subcellular location is the cytoskeleton. Functionally, may be involved in the spatial organization of cell surface growth. An overproduction of ABP1 causes the assembly of the cortical actin skeleton at inappropriate sites on the cell surface, resulting in delocalized surface growth. The polypeptide is Actin-binding protein (ABP1) (Maudiozyma exigua (Yeast)).